The primary structure comprises 755 residues: Xaa-Pro dipeptidyl-peptidase (755 aa).

Active-site charge relay system residues include Ser348, Asp468, and His498.

The protein belongs to the peptidase S15 family. In terms of assembly, homodimer.

Its subcellular location is the cytoplasm. The catalysed reaction is Hydrolyzes Xaa-Pro-|- bonds to release unblocked, N-terminal dipeptides from substrates including Ala-Pro-|-p-nitroanilide and (sequentially) Tyr-Pro-|-Phe-Pro-|-Gly-Pro-|-Ile.. Removes N-terminal dipeptides sequentially from polypeptides having unsubstituted N-termini provided that the penultimate residue is proline. This is Xaa-Pro dipeptidyl-peptidase from Streptococcus thermophilus (strain ATCC BAA-491 / LMD-9).